A 63-amino-acid polypeptide reads, in one-letter code: Large ribosomal subunit protein bL32 (63 aa).

This sequence belongs to the bacterial ribosomal protein bL32 family.

In Lactobacillus delbrueckii subsp. bulgaricus (strain ATCC 11842 / DSM 20081 / BCRC 10696 / JCM 1002 / NBRC 13953 / NCIMB 11778 / NCTC 12712 / WDCM 00102 / Lb 14), this protein is Large ribosomal subunit protein bL32.